Consider the following 278-residue polypeptide: Probable cytochrome c oxidase subunit 3 (278 aa).

The next 6 membrane-spanning stretches (helical) occupy residues 21-41 (PWPILTSFALLLLVIGGISSM), 46-66 (FNMYILSAGVISVIYCLYSWW), 89-109 (IGMVLFILTETVFFSVFFASF), 174-194 (CVTALAFTIVLGIFFTLMQVY), 212-232 (FYLATGFHGAHVVIGTIFLIV), and 256-276 (AWYWHFVDVVWLFLFTFVYIL).

This sequence belongs to the cytochrome c oxidase subunit 3 family.

It localises to the cell membrane. The enzyme catalyses 4 Fe(II)-[cytochrome c] + O2 + 8 H(+)(in) = 4 Fe(III)-[cytochrome c] + 2 H2O + 4 H(+)(out). The chain is Probable cytochrome c oxidase subunit 3 (ctaE) from Rickettsia prowazekii (strain Madrid E).